The following is a 387-amino-acid chain: Phosphoglycerate kinase (387 aa).

Substrate is bound by residues 21-23, arginine 36, 59-62, arginine 113, and arginine 146; these read DLN and HLGR. Residues lysine 197, glutamate 314, and 340-343 each bind ATP; that span reads GGDT.

It belongs to the phosphoglycerate kinase family. Monomer.

Its subcellular location is the cytoplasm. The catalysed reaction is (2R)-3-phosphoglycerate + ATP = (2R)-3-phospho-glyceroyl phosphate + ADP. The protein operates within carbohydrate degradation; glycolysis; pyruvate from D-glyceraldehyde 3-phosphate: step 2/5. The protein is Phosphoglycerate kinase (pgk) of Pasteurella multocida (strain Pm70).